Reading from the N-terminus, the 436-residue chain is 3-ketoacyl-CoA thiolase (436 aa).

The active-site Acyl-thioester intermediate is the Cys-99. Active-site proton acceptor residues include His-392 and Cys-422.

The protein belongs to the thiolase-like superfamily. Thiolase family. Heterotetramer of two alpha chains (FadJ) and two beta chains (FadI).

Its subcellular location is the cytoplasm. The enzyme catalyses an acyl-CoA + acetyl-CoA = a 3-oxoacyl-CoA + CoA. It participates in lipid metabolism; fatty acid beta-oxidation. Functionally, catalyzes the final step of fatty acid oxidation in which acetyl-CoA is released and the CoA ester of a fatty acid two carbons shorter is formed. The chain is 3-ketoacyl-CoA thiolase from Pseudoalteromonas atlantica (strain T6c / ATCC BAA-1087).